Consider the following 254-residue polypeptide: Probable transcriptional regulatory protein Cyan7425_4347 (254 aa).

Belongs to the TACO1 family.

The protein resides in the cytoplasm. The chain is Probable transcriptional regulatory protein Cyan7425_4347 from Cyanothece sp. (strain PCC 7425 / ATCC 29141).